A 121-amino-acid polypeptide reads, in one-letter code: Small ribosomal subunit protein uS13 (121 aa).

The segment at 94-121 (GLPLRGQRTRTNARTRKGPRRAAQALKK) is disordered.

The protein belongs to the universal ribosomal protein uS13 family. Part of the 30S ribosomal subunit. Forms a loose heterodimer with protein S19. Forms two bridges to the 50S subunit in the 70S ribosome.

In terms of biological role, located at the top of the head of the 30S subunit, it contacts several helices of the 16S rRNA. In the 70S ribosome it contacts the 23S rRNA (bridge B1a) and protein L5 of the 50S subunit (bridge B1b), connecting the 2 subunits; these bridges are implicated in subunit movement. Contacts the tRNAs in the A and P-sites. The chain is Small ribosomal subunit protein uS13 from Burkholderia mallei (strain NCTC 10247).